The following is a 139-amino-acid chain: MRLTQGCFSFLPDLTDEQIEKQVNYAISKGWAMNVEWTDDPHPRNNYWELWGLPLFDIKDPASVMFELQEARKACAAGYIRMNAFDASYGTESCVMSFIVNRPANEPGFYLERAEGKGRQINYTIKSYSVQANPEGGRY.

This sequence belongs to the RuBisCO small chain family. As to quaternary structure, heterohexadecamer of 8 large and 8 small subunits.

The protein localises to the plastid. It is found in the chloroplast. Its function is as follows. RuBisCO catalyzes two reactions: the carboxylation of D-ribulose 1,5-bisphosphate, the primary event in carbon dioxide fixation, as well as the oxidative fragmentation of the pentose substrate in the photorespiration process. Both reactions occur simultaneously and in competition at the same active site. Although the small subunit is not catalytic it is essential for maximal activity. This is Ribulose bisphosphate carboxylase small subunit from Cylindrotheca sp. (strain N1) (Marine diatom).